A 131-amino-acid polypeptide reads, in one-letter code: MRKTKVINTQISSVISDMGHFDTLSIGDAGMPVPVGTKKIDVAIENGVPSFIQVLTNILSELEVQKVYLANEIKTANPEQLAAIKALIGETPIEFIDHSQMKQDLNKAKAFVRTGEMTPYSNIILESGVVF.

Residue H20 is the Proton donor of the active site. Residues D28, H98, and 120 to 122 (YSN) each bind substrate.

The protein belongs to the RbsD / FucU family. RbsD subfamily. As to quaternary structure, homodecamer.

It localises to the cytoplasm. It catalyses the reaction beta-D-ribopyranose = beta-D-ribofuranose. Its pathway is carbohydrate metabolism; D-ribose degradation; D-ribose 5-phosphate from beta-D-ribopyranose: step 1/2. In terms of biological role, catalyzes the interconversion of beta-pyran and beta-furan forms of D-ribose. In Latilactobacillus sakei subsp. sakei (strain 23K) (Lactobacillus sakei subsp. sakei), this protein is D-ribose pyranase.